A 102-amino-acid chain; its full sequence is UPF0235 protein msl4154 (102 aa).

It belongs to the UPF0235 family.

The polypeptide is UPF0235 protein msl4154 (Mesorhizobium japonicum (strain LMG 29417 / CECT 9101 / MAFF 303099) (Mesorhizobium loti (strain MAFF 303099))).